The chain runs to 419 residues: Akuammiline synthase 1 (419 aa).

The active-site Proton acceptor is the H151. The Nuclear localization signal motif lies at 206 to 213 (TRRFVFPA). D359 acts as the Proton acceptor in catalysis.

The protein belongs to the plant acyltransferase family. Monomer.

It localises to the cytoplasm. Its subcellular location is the nucleus. It carries out the reaction rhazimol + acetyl-CoA = akuammiline + CoA + H(+). It functions in the pathway alkaloid biosynthesis. In terms of biological role, acyltransferase involved in the biosynthesis of akuammilan monoterpene indole alkaloids (MIAs) natural products, components with various biological properties such as antidiabetic, antibacterial, anti-inflammatory, anticancer, and antimalarial activities. Catalyzes the conversion of rhazimol to akuammiline. The protein is Akuammiline synthase 1 of Alstonia scholaris (Dogbane).